Here is a 330-residue protein sequence, read N- to C-terminus: 5-dehydro-2-deoxygluconokinase (330 aa).

It belongs to the carbohydrate kinase PfkB family.

The enzyme catalyses 5-dehydro-2-deoxy-D-gluconate + ATP = 6-phospho-5-dehydro-2-deoxy-D-gluconate + ADP + H(+). It functions in the pathway polyol metabolism; myo-inositol degradation into acetyl-CoA; acetyl-CoA from myo-inositol: step 5/7. Catalyzes the phosphorylation of 5-dehydro-2-deoxy-D-gluconate (2-deoxy-5-keto-D-gluconate or DKG) to 6-phospho-5-dehydro-2-deoxy-D-gluconate (DKGP). The polypeptide is 5-dehydro-2-deoxygluconokinase (Bacillus velezensis (strain DSM 23117 / BGSC 10A6 / LMG 26770 / FZB42) (Bacillus amyloliquefaciens subsp. plantarum)).